The chain runs to 225 residues: Orotidine 5'-phosphate decarboxylase (225 aa).

Residues aspartate 9, lysine 31, 58 to 67 (DLKLHDIPNT), threonine 115, arginine 176, glutamine 184, glycine 204, and arginine 205 each bind substrate. The Proton donor role is filled by lysine 60.

It belongs to the OMP decarboxylase family. Type 1 subfamily. In terms of assembly, homodimer.

It catalyses the reaction orotidine 5'-phosphate + H(+) = UMP + CO2. It functions in the pathway pyrimidine metabolism; UMP biosynthesis via de novo pathway; UMP from orotate: step 2/2. Catalyzes the decarboxylation of orotidine 5'-monophosphate (OMP) to uridine 5'-monophosphate (UMP). The protein is Orotidine 5'-phosphate decarboxylase of Wolbachia sp. subsp. Brugia malayi (strain TRS).